Consider the following 331-residue polypeptide: Thiamine thiazole synthase (331 aa).

Substrate-binding positions include serine 82, 103–104 (EA), glycine 111, and valine 176. 2,3-didehydroalanine (Cys) is present on cysteine 210. Substrate contacts are provided by residues aspartate 212, histidine 242, methionine 296, and 306–308 (RMG).

The protein belongs to the THI4 family. In terms of assembly, homooctamer. Fe cation serves as cofactor. During the catalytic reaction, a sulfide is transferred from Cys-210 to a reaction intermediate, generating a dehydroalanine residue.

The protein localises to the cytoplasm. Its subcellular location is the nucleus. The enzyme catalyses [ADP-thiazole synthase]-L-cysteine + glycine + NAD(+) = [ADP-thiazole synthase]-dehydroalanine + ADP-5-ethyl-4-methylthiazole-2-carboxylate + nicotinamide + 3 H2O + 2 H(+). Involved in biosynthesis of the thiamine precursor thiazole. Catalyzes the conversion of NAD and glycine to adenosine diphosphate 5-(2-hydroxyethyl)-4-methylthiazole-2-carboxylic acid (ADT), an adenylated thiazole intermediate. The reaction includes an iron-dependent sulfide transfer from a conserved cysteine residue of the protein to a thiazole intermediate. The enzyme can only undergo a single turnover, which suggests it is a suicide enzyme. May have additional roles in adaptation to various stress conditions and in DNA damage tolerance. The chain is Thiamine thiazole synthase from Eremothecium gossypii (strain ATCC 10895 / CBS 109.51 / FGSC 9923 / NRRL Y-1056) (Yeast).